We begin with the raw amino-acid sequence, 554 residues long: Dihydroxy-acid dehydratase (554 aa).

D78 lines the Mg(2+) pocket. C119 provides a ligand contact to [2Fe-2S] cluster. D120 and K121 together coordinate Mg(2+). Position 121 is an N6-carboxylysine (K121). Residue C191 coordinates [2Fe-2S] cluster. Mg(2+) is bound at residue E444. S470 acts as the Proton acceptor in catalysis.

It belongs to the IlvD/Edd family. As to quaternary structure, homodimer. It depends on [2Fe-2S] cluster as a cofactor. The cofactor is Mg(2+).

It catalyses the reaction (2R)-2,3-dihydroxy-3-methylbutanoate = 3-methyl-2-oxobutanoate + H2O. It carries out the reaction (2R,3R)-2,3-dihydroxy-3-methylpentanoate = (S)-3-methyl-2-oxopentanoate + H2O. It participates in amino-acid biosynthesis; L-isoleucine biosynthesis; L-isoleucine from 2-oxobutanoate: step 3/4. It functions in the pathway amino-acid biosynthesis; L-valine biosynthesis; L-valine from pyruvate: step 3/4. In terms of biological role, functions in the biosynthesis of branched-chain amino acids. Catalyzes the dehydration of (2R,3R)-2,3-dihydroxy-3-methylpentanoate (2,3-dihydroxy-3-methylvalerate) into 2-oxo-3-methylpentanoate (2-oxo-3-methylvalerate) and of (2R)-2,3-dihydroxy-3-methylbutanoate (2,3-dihydroxyisovalerate) into 2-oxo-3-methylbutanoate (2-oxoisovalerate), the penultimate precursor to L-isoleucine and L-valine, respectively. This Nitratidesulfovibrio vulgaris (strain ATCC 29579 / DSM 644 / CCUG 34227 / NCIMB 8303 / VKM B-1760 / Hildenborough) (Desulfovibrio vulgaris) protein is Dihydroxy-acid dehydratase.